The primary structure comprises 505 residues: ATP synthase subunit alpha (505 aa).

Residue 170 to 177 (GDRQTGKT) participates in ATP binding.

This sequence belongs to the ATPase alpha/beta chains family. F-type ATPases have 2 components, CF(1) - the catalytic core - and CF(0) - the membrane proton channel. CF(1) has five subunits: alpha(3), beta(3), gamma(1), delta(1), epsilon(1). CF(0) has four main subunits: a(1), b(1), b'(1) and c(9-12).

The protein resides in the cellular thylakoid membrane. The enzyme catalyses ATP + H2O + 4 H(+)(in) = ADP + phosphate + 5 H(+)(out). Produces ATP from ADP in the presence of a proton gradient across the membrane. The alpha chain is a regulatory subunit. In Prochlorococcus marinus (strain SARG / CCMP1375 / SS120), this protein is ATP synthase subunit alpha.